Here is a 447-residue protein sequence, read N- to C-terminus: Tubulin beta chain (447 aa).

GTP-binding residues include Gln11, Glu69, Ser138, Gly142, Thr143, Gly144, Asn204, and Asn226. Glu69 serves as a coordination point for Mg(2+). The disordered stretch occupies residues 424-447 (QYQEARSTDSDEYDNEEYYNQQEE). Positions 433–447 (SDEYDNEEYYNQQEE) are enriched in acidic residues.

It belongs to the tubulin family. In terms of assembly, dimer of alpha and beta chains. A typical microtubule is a hollow water-filled tube with an outer diameter of 25 nm and an inner diameter of 15 nM. Alpha-beta heterodimers associate head-to-tail to form protofilaments running lengthwise along the microtubule wall with the beta-tubulin subunit facing the microtubule plus end conferring a structural polarity. Microtubules usually have 13 protofilaments but different protofilament numbers can be found in some organisms and specialized cells. Mg(2+) serves as cofactor. As to expression, lens specific.

It localises to the cytoplasm. The protein localises to the cytoskeleton. Tubulin is the major constituent of microtubules, a cylinder consisting of laterally associated linear protofilaments composed of alpha- and beta-tubulin heterodimers. Microtubules grow by the addition of GTP-tubulin dimers to the microtubule end, where a stabilizing cap forms. Below the cap, tubulin dimers are in GDP-bound state, owing to GTPase activity of alpha-tubulin. This is Tubulin beta chain from Enteroctopus dofleini (North Pacific giant octopus).